We begin with the raw amino-acid sequence, 346 residues long: NADPH dehydrogenase (346 aa).

23–26 (SPMC) contributes to the FMN binding site. Y28 provides a ligand contact to substrate. The FMN site is built by A60 and Q102. 164-167 (HGAH) serves as a coordination point for substrate. FMN is bound by residues R215 and 307–308 (GR).

The protein belongs to the NADH:flavin oxidoreductase/NADH oxidase family. NamA subfamily. In terms of assembly, homotetramer. The cofactor is FMN.

It carries out the reaction A + NADPH + H(+) = AH2 + NADP(+). Its function is as follows. Catalyzes the reduction of the double bond of an array of alpha,beta-unsaturated aldehydes and ketones. It also reduces the nitro group of nitroester and nitroaromatic compounds. It could have a role in detoxification processes. The protein is NADPH dehydrogenase of Bacillus cytotoxicus (strain DSM 22905 / CIP 110041 / 391-98 / NVH 391-98).